We begin with the raw amino-acid sequence, 308 residues long: Cilia- and flagella-associated protein 73 (308 aa).

2 coiled-coil regions span residues 103 to 134 (RIQK…LEKN) and 164 to 227 (LSAT…QEAK).

The protein belongs to the CFAP73 family. Interacts with FAP100; form the modifier of inner arm (MIA) complex.

The protein resides in the cytoplasm. The protein localises to the cytoskeleton. Its subcellular location is the flagellum axoneme. As part of MIA, a complex associated with the outer doublet microtubules of the axoneme, may play a role in ciliary/flagellar motility by regulating the assembly and the activity of inner dynein arm. In Chlamydomonas reinhardtii (Chlamydomonas smithii), this protein is Cilia- and flagella-associated protein 73.